The primary structure comprises 339 residues: MESLLQKVYDQENLTKAEMNILATEIFEGRLSKTKMAAFLMALKVKGETAEEMAGIAEAMQEVAIQVAFPAGTAMDNCGTGGDKSNSFNISTTSAFVLAAAGIPVAKHGNRSISSRSGSADVCQELGIDINMRPEDMTYLLEKVGIAFLFAPHVHPNMKYVMDVRKELGTPTIFNLIGPLTNPVHLETQLMGIYRRDLLKQTAEVLGQLGRKRAVVLNGAGFMDEASLAGENHYALYESGEVQLFTLSPEEVGLANYPLEAIRGGDAKENAAILRSVLEGEPGAHLDTVLLNAGFGLFASGKVATVKEGVNLARDLVRSGLAKQKLADLITYQKEVLTK.

5-phospho-alpha-D-ribose 1-diphosphate-binding positions include glycine 79, glycine 82–aspartate 83, serine 87, asparagine 89–threonine 92, lysine 107–serine 115, and serine 119. An anthranilate-binding site is contributed by glycine 79. Serine 91 contributes to the Mg(2+) binding site. Asparagine 110 contacts anthranilate. An anthranilate-binding site is contributed by arginine 165. Residues aspartate 224 and glutamate 225 each coordinate Mg(2+).

The protein belongs to the anthranilate phosphoribosyltransferase family. Homodimer. The cofactor is Mg(2+).

It carries out the reaction N-(5-phospho-beta-D-ribosyl)anthranilate + diphosphate = 5-phospho-alpha-D-ribose 1-diphosphate + anthranilate. It functions in the pathway amino-acid biosynthesis; L-tryptophan biosynthesis; L-tryptophan from chorismate: step 2/5. Catalyzes the transfer of the phosphoribosyl group of 5-phosphorylribose-1-pyrophosphate (PRPP) to anthranilate to yield N-(5'-phosphoribosyl)-anthranilate (PRA). This is Anthranilate phosphoribosyltransferase from Listeria welshimeri serovar 6b (strain ATCC 35897 / DSM 20650 / CCUG 15529 / CIP 8149 / NCTC 11857 / SLCC 5334 / V8).